We begin with the raw amino-acid sequence, 521 residues long: CDP-diacylglycerol--glycerol-3-phosphate 3-phosphatidyltransferase (521 aa).

91 to 98 (ASLYLGKS) is an ATP binding site. 2 consecutive PLD phosphodiesterase domains span residues 177–203 (GLGL…SNDY) and 419–457 (NGWS…TRRA). Catalysis depends on residues H182, K184, and D189.

Belongs to the CDP-alcohol phosphatidyltransferase class-II family.

It is found in the mitochondrion. It carries out the reaction a CDP-1,2-diacyl-sn-glycerol + sn-glycerol 3-phosphate = a 1,2-diacyl-sn-glycero-3-phospho-(1'-sn-glycero-3'-phosphate) + CMP + H(+). It participates in phospholipid metabolism; phosphatidylglycerol biosynthesis; phosphatidylglycerol from CDP-diacylglycerol: step 1/2. In terms of biological role, essential for the viability of mitochondrial petite mutant. Catalyzes the committed step to the synthesis of the acidic phospholipids. In Saccharomyces pastorianus (Lager yeast), this protein is CDP-diacylglycerol--glycerol-3-phosphate 3-phosphatidyltransferase (PGS1).